A 338-amino-acid chain; its full sequence is 1-aminocyclopropane-1-carboxylate deaminase (338 aa).

K51 is subject to N6-(pyridoxal phosphate)lysine. S78 functions as the Nucleophile in the catalytic mechanism.

The protein belongs to the ACC deaminase/D-cysteine desulfhydrase family. In terms of assembly, homotrimer. Requires pyridoxal 5'-phosphate as cofactor.

It catalyses the reaction 1-aminocyclopropane-1-carboxylate + H2O = 2-oxobutanoate + NH4(+). Catalyzes a cyclopropane ring-opening reaction, the irreversible conversion of 1-aminocyclopropane-1-carboxylate (ACC) to ammonia and alpha-ketobutyrate. Allows growth on ACC as a nitrogen source. In Burkholderia lata (strain ATCC 17760 / DSM 23089 / LMG 22485 / NCIMB 9086 / R18194 / 383), this protein is 1-aminocyclopropane-1-carboxylate deaminase.